A 66-amino-acid polypeptide reads, in one-letter code: MAKKNASLLVKLVSTAIKITKTGEEKSTGYFYVKKRNPKKLTKKLEFRKYDPVVRRHVLFKEEKLK.

Belongs to the bacterial ribosomal protein bL33 family.

The protein is Large ribosomal subunit protein bL33 of Wolbachia pipientis wMel.